We begin with the raw amino-acid sequence, 322 residues long: Gluconeogenesis factor (322 aa).

This sequence belongs to the gluconeogenesis factor family.

It is found in the cytoplasm. Required for morphogenesis under gluconeogenic growth conditions. The chain is Gluconeogenesis factor from Listeria innocua serovar 6a (strain ATCC BAA-680 / CLIP 11262).